A 96-amino-acid chain; its full sequence is Protein FPV129 (96 aa).

The next 2 membrane-spanning stretches (helical) occupy residues I36–I56 and L71–V91.

This sequence belongs to the chordopoxvirinae L2 family.

Its subcellular location is the virion membrane. It localises to the host cytoplasm. Functionally, early protein involved in early virion morphogenesis. Participates in the formation and elongation of crescent-shaped membrane precursors of immature virions in cytoplasmic factories. This Vertebrata (FPV) protein is Protein FPV129.